Here is a 131-residue protein sequence, read N- to C-terminus: ER membrane protein complex subunit 5 (131 aa).

Over M1–P3 the chain is Cytoplasmic. A helical membrane pass occupies residues S4–L22. Residues S23–I43 are Lumenal-facing. The helical transmembrane segment at D44–I63 threads the bilayer. Residues A64–R131 lie on the Cytoplasmic side of the membrane. Residue S120 is modified to Phosphoserine.

The protein belongs to the membrane magnesium transporter (TC 1.A.67) family. As to quaternary structure, component of the ER membrane protein complex (EMC).

It is found in the endoplasmic reticulum membrane. The protein resides in the golgi apparatus membrane. The protein localises to the early endosome membrane. Functionally, part of the endoplasmic reticulum membrane protein complex (EMC) that enables the energy-independent insertion into endoplasmic reticulum membranes of newly synthesized membrane proteins. Preferentially accommodates proteins with transmembrane domains that are weakly hydrophobic or contain destabilizing features such as charged and aromatic residues. Involved in the cotranslational insertion of multi-pass membrane proteins in which stop-transfer membrane-anchor sequences become ER membrane spanning helices. It is also required for the post-translational insertion of tail-anchored/TA proteins in endoplasmic reticulum membranes. By mediating the proper cotranslational insertion of N-terminal transmembrane domains in an N-exo topology, with translocated N-terminus in the lumen of the ER, controls the topology of multi-pass membrane proteins like the G protein-coupled receptors. By regulating the insertion of various proteins in membranes, it is indirectly involved in many cellular processes. May be involved in Mg(2+) transport. The polypeptide is ER membrane protein complex subunit 5 (Pongo abelii (Sumatran orangutan)).